The primary structure comprises 224 residues: Urease accessory protein UreF (224 aa).

The protein belongs to the UreF family. In terms of assembly, ureD, UreF and UreG form a complex that acts as a GTP-hydrolysis-dependent molecular chaperone, activating the urease apoprotein by helping to assemble the nickel containing metallocenter of UreC. The UreE protein probably delivers the nickel.

The protein localises to the cytoplasm. Functionally, required for maturation of urease via the functional incorporation of the urease nickel metallocenter. The polypeptide is Urease accessory protein UreF (Nitrosococcus oceani (strain ATCC 19707 / BCRC 17464 / JCM 30415 / NCIMB 11848 / C-107)).